A 225-amino-acid chain; its full sequence is NAD(P)H-hydrate epimerase (225 aa).

One can recognise a YjeF N-terminal domain in the interval methionine 9 to phenylalanine 209. Asparagine 57–aspartate 61 lines the (6S)-NADPHX pocket. The K(+) site is built by asparagine 58 and aspartate 119. (6S)-NADPHX contacts are provided by residues glycine 123–leucine 129 and aspartate 152. Threonine 155 contributes to the K(+) binding site.

Belongs to the NnrE/AIBP family. The cofactor is K(+).

It carries out the reaction (6R)-NADHX = (6S)-NADHX. It catalyses the reaction (6R)-NADPHX = (6S)-NADPHX. In terms of biological role, catalyzes the epimerization of the S- and R-forms of NAD(P)HX, a damaged form of NAD(P)H that is a result of enzymatic or heat-dependent hydration. This is a prerequisite for the S-specific NAD(P)H-hydrate dehydratase to allow the repair of both epimers of NAD(P)HX. This is NAD(P)H-hydrate epimerase from Leuconostoc kimchii (strain IMSNU 11154 / KCTC 2386 / IH25).